We begin with the raw amino-acid sequence, 298 residues long: Cyclin-dependent kinase 2 homolog (298 aa).

Positions 4-284 (YHKMEKIGEG…AKEALKHDYF (281 aa)) constitute a Protein kinase domain. ATP-binding positions include 10–18 (IGEGTYGVV) and Lys-32. A Phosphothreonine modification is found at Thr-14. A Phosphotyrosine modification is found at Tyr-15. Asp-125 functions as the Proton acceptor in the catalytic mechanism. Thr-158 bears the Phosphothreonine mark.

This sequence belongs to the protein kinase superfamily. CMGC Ser/Thr protein kinase family. CDC2/CDKX subfamily. In terms of assembly, may form a complex composed of at least the catalytic subunit CRK2 and a cyclin. Mg(2+) serves as cofactor.

The protein resides in the cytoplasm. It catalyses the reaction L-seryl-[protein] + ATP = O-phospho-L-seryl-[protein] + ADP + H(+). It carries out the reaction L-threonyl-[protein] + ATP = O-phospho-L-threonyl-[protein] + ADP + H(+). The enzyme catalyses [DNA-directed RNA polymerase] + ATP = phospho-[DNA-directed RNA polymerase] + ADP + H(+). With respect to regulation, phosphorylation at Thr-14 or Tyr-15 inactivates the enzyme, while phosphorylation at Thr-158 activates it. Its function is as follows. Serine/threonine-protein kinase. Involved in the control of the cell cycle. Required for entry into S-phase and mitosis. Probable component of the kinase complex that phosphorylates the repetitive C-terminus of RNA polymerase II. This Theileria annulata protein is Cyclin-dependent kinase 2 homolog.